The following is a 406-amino-acid chain: Alpha-1-antitrypsin (406 aa).

The first 24 residues, methionine 1–alanine 24, serve as a signal peptide directing secretion. Phosphoserine is present on serine 33. Asparagine 59, asparagine 96, and asparagine 260 each carry an N-linked (GlcNAc...) asparagine glycan. Positions glycine 362–asparagine 381 are RCL. Phosphoserine is present on serine 372.

It belongs to the serpin family. As to quaternary structure, interacts with CELA2A. Interacts with ERGIC3 and LMAN1/ERGIC53. Interacts with PRSS1/Trypsin. Plasma.

Its subcellular location is the secreted. In terms of biological role, inhibitor of serine proteases. Can inhibit elastase, trypsin, chymotrypsin and plasmin. The protein is Alpha-1-antitrypsin of Meriones unguiculatus (Mongolian jird).